Consider the following 337-residue polypeptide: Ferredoxin--NADP reductase (337 aa).

Positions 35, 43, 48, 88, 122, 289, and 330 each coordinate FAD.

Belongs to the ferredoxin--NADP reductase type 2 family. In terms of assembly, homodimer. FAD is required as a cofactor.

The catalysed reaction is 2 reduced [2Fe-2S]-[ferredoxin] + NADP(+) + H(+) = 2 oxidized [2Fe-2S]-[ferredoxin] + NADPH. This chain is Ferredoxin--NADP reductase, found in Ehrlichia ruminantium (strain Gardel).